A 372-amino-acid chain; its full sequence is Rab9 effector protein with kelch motifs (372 aa).

5 Kelch repeats span residues 49–95 (KVFI…FLPS), 100–146 (SIWV…TSSA), 151–203 (HLYV…AAGT), 204–250 (KLFI…AAVA), and 254–303 (HVYV…VIPW). The segment at 321–342 (LQDEKGDAAEKPETRSGGSREE) is disordered. Over residues 322–342 (QDEKGDAAEKPETRSGGSREE) the composition is skewed to basic and acidic residues. A Kelch 6 repeat occupies 349 to 372 (LCFVFGGMNTEGEIYDDCLVTVVD).

In terms of assembly, interacts with PIKFYVE; the interaction recruits RABEPK to the endosomal membrane. Interacts with RAB9 in its GTP-bound conformation. Phosphorylated on Ser residues by PIKFYVE.

It localises to the cytoplasm. It is found in the endosome membrane. Functionally, rab9 effector required for endosome to trans-Golgi network (TGN) transport. This is Rab9 effector protein with kelch motifs (Rabepk) from Rattus norvegicus (Rat).